Consider the following 439-residue polypeptide: Acyl-coenzyme A thioesterase 9, mitochondrial (439 aa).

The transit peptide at 1–21 directs the protein to the mitochondrion; that stretch reads MRRAALRLCALGKGQLTPGRG. HotDog ACOT-type domains lie at 84–209 and 289–401; these read KDSY…RDSE and ENSK…EKEV. K103 is subject to N6-acetyllysine.

Belongs to the acyl coenzyme A hydrolase family. As to quaternary structure, interacts with NYAP1, NYAP2 and MYO16.

It is found in the mitochondrion. Its subcellular location is the mitochondrion matrix. The protein localises to the mitochondrion inner membrane. The enzyme catalyses butanoyl-CoA + H2O = butanoate + CoA + H(+). It carries out the reaction propanoyl-CoA + H2O = propanoate + CoA + H(+). It catalyses the reaction hexadecanoyl-CoA + H2O = hexadecanoate + CoA + H(+). The catalysed reaction is octanoyl-CoA + H2O = octanoate + CoA + H(+). The enzyme catalyses decanoyl-CoA + H2O = decanoate + CoA + H(+). It carries out the reaction tetradecanoyl-CoA + H2O = tetradecanoate + CoA + H(+). It catalyses the reaction 4,8-dimethylnonanoyl-CoA + H2O = 4,8-dimethylnonanoate + CoA + H(+). The catalysed reaction is 3-methylbutanoyl-CoA + H2O = 3-methylbutanoate + CoA + H(+). The enzyme catalyses 2-methylpropanoyl-CoA + H2O = 2-methylpropanoate + CoA + H(+). It participates in lipid metabolism; fatty acid metabolism. Its activity is regulated as follows. Strongly inhibited by NADH and CoA. In terms of biological role, mitochondrial acyl-CoA thioesterase. Catalyzes the hydrolysis of acyl-CoAs into free fatty acids and coenzyme A (CoA), regulating their respective intracellular levels. Regulates both mitochondrial lipid and amino acid metabolism. This Homo sapiens (Human) protein is Acyl-coenzyme A thioesterase 9, mitochondrial.